Here is a 603-residue protein sequence, read N- to C-terminus: MESSALLTAGVLFLFVAVVAVPIAARLGIGAVLGYLIAGIAIGPWGLGFIRDVEAILHFSELGVVFLMFIIGLELNPGKLWTLRRSIFGVGAAQVGLSALILGGALYLTDFSWQSALIGGVGLAMSSTAMALQLMREKGMNRNESGQLGFSVLLFQDLAVIPALALIPILAGVQGDFGDWERIGLKVAAFLGMLIGGRYLVRPLFRFIAASGVREVFTAAALLLVLGSALFMEALGLSMALGTFIAGILLAESEYRHELEIAIEPFKGLLLGLFFISVGMALNLGILYTHIVKIMIAVLVLVAVKGAVLYFLARINRMRRSERLQFAGVLSQGGEFAFVLFSAAASFNVLKGEQLPLLLVTVTLSMMTTPLLMQVIDRVLARRYNVQDVPDEKPYVEDDEPQVIVVGFGRFGQVISRLLMANKMRITVLERDISAVSLMRSYGYKVYYGDATELELLRSAGADKARSIVITCNAPEDTMEIVHLCQQHFPNLEILARARGRVEAHELLQTGVRHFSRETFSSALELGRKTLVTLGMHPHQAMRAQQHFRRLDMRMLRELMPQLTGDVAQISRVKEARRELEDIFQREMLRERRRPSVWDEDDE.

13 helical membrane-spanning segments follow: residues 5-25, 29-49, 53-73, 87-107, 115-135, 152-172, 180-202, 207-227, 230-250, 268-288, 291-311, 326-346, and 356-376; these read ALLT…PIAA, IGAV…GLGF, VEAI…IIGL, IFGV…GALY, SALI…LQLM, VLLF…ILAG, WERI…YLVR, FIAA…LVLG, LFME…GILL, GLLL…GILY, IVKI…VLYF, FAGV…AAAS, and PLLL…MQVI. Positions 400–521 constitute an RCK N-terminal domain; sequence EPQVIVVGFG…VRHFSRETFS (122 aa).

It belongs to the monovalent cation:proton antiporter 2 (CPA2) transporter (TC 2.A.37) family. KefB subfamily. Interacts with the regulatory subunit KefG.

Its subcellular location is the cell inner membrane. Pore-forming subunit of a potassium efflux system that confers protection against electrophiles. Catalyzes K(+)/H(+) antiport. The protein is Glutathione-regulated potassium-efflux system protein KefB of Pectobacterium atrosepticum (strain SCRI 1043 / ATCC BAA-672) (Erwinia carotovora subsp. atroseptica).